Here is a 61-residue protein sequence, read N- to C-terminus: Photosystem II reaction center protein K (61 aa).

Residues 1–24 (MPNILSLTCICFNSVIYPTSFFFA) constitute a propeptide that is removed on maturation. A helical membrane pass occupies residues 32 to 52 (IFNPIVDFMPVIPLFFFLLAF).

It belongs to the PsbK family. In terms of assembly, PSII is composed of 1 copy each of membrane proteins PsbA, PsbB, PsbC, PsbD, PsbE, PsbF, PsbH, PsbI, PsbJ, PsbK, PsbL, PsbM, PsbT, PsbX, PsbY, PsbZ, Psb30/Ycf12, at least 3 peripheral proteins of the oxygen-evolving complex and a large number of cofactors. It forms dimeric complexes.

The protein resides in the plastid. Its subcellular location is the chloroplast thylakoid membrane. In terms of biological role, one of the components of the core complex of photosystem II (PSII). PSII is a light-driven water:plastoquinone oxidoreductase that uses light energy to abstract electrons from H(2)O, generating O(2) and a proton gradient subsequently used for ATP formation. It consists of a core antenna complex that captures photons, and an electron transfer chain that converts photonic excitation into a charge separation. The protein is Photosystem II reaction center protein K of Triticum aestivum (Wheat).